The primary structure comprises 142 residues: uncharacterized protein (142 aa).

Transmembrane regions (helical) follow at residues 12–29 (NAIL…YGLL) and 44–66 (IYGQ…GVTA).

It localises to the cell membrane. This is an uncharacterized protein from Archaeoglobus fulgidus (strain ATCC 49558 / DSM 4304 / JCM 9628 / NBRC 100126 / VC-16).